The sequence spans 140 residues: Transcription antitermination protein NusB (140 aa).

This sequence belongs to the NusB family.

In terms of biological role, involved in transcription antitermination. Required for transcription of ribosomal RNA (rRNA) genes. Binds specifically to the boxA antiterminator sequence of the ribosomal RNA (rrn) operons. This Leptospira biflexa serovar Patoc (strain Patoc 1 / Ames) protein is Transcription antitermination protein NusB.